A 71-amino-acid polypeptide reads, in one-letter code: Small ribosomal subunit protein bS21 (71 aa).

The tract at residues 48–71 (ENATLAKRHAKRNARENARNTRLY) is disordered. Residues 60–71 (NARENARNTRLY) are compositionally biased toward basic and acidic residues.

Belongs to the bacterial ribosomal protein bS21 family.

The chain is Small ribosomal subunit protein bS21 from Haemophilus influenzae (strain 86-028NP).